The primary structure comprises 334 residues: Ferrochelatase (334 aa).

Residues His-207 and Glu-288 each contribute to the Fe cation site.

Belongs to the ferrochelatase family.

It is found in the cytoplasm. It carries out the reaction heme b + 2 H(+) = protoporphyrin IX + Fe(2+). The protein operates within porphyrin-containing compound metabolism; protoheme biosynthesis; protoheme from protoporphyrin-IX: step 1/1. In terms of biological role, catalyzes the ferrous insertion into protoporphyrin IX. In Helicobacter pylori (strain P12), this protein is Ferrochelatase.